Consider the following 200-residue polypeptide: High mobility group protein 1 homolog (200 aa).

2 DNA-binding regions (HMG box) span residues 11–81 and 100–168; these read PRGR…QSYK and PKRN…AEYK. Residues 64-86 are compositionally biased toward basic and acidic residues; that stretch reads EKSMRDKVRYDREMQSYKPPKGE. Disordered stretches follow at residues 64-103 and 169-200; these read EKSM…PKRN and AKAK…DDSD. Positions 190–200 are enriched in acidic residues; the sequence is SSDDSSSDDSD.

It belongs to the HMGB family.

It is found in the nucleus. The protein resides in the chromosome. In terms of biological role, binds preferentially single-stranded DNA and unwinds double-stranded DNA. This Strongylocentrotus purpuratus (Purple sea urchin) protein is High mobility group protein 1 homolog (HMG1).